A 1116-amino-acid chain; its full sequence is Electrogenic sodium bicarbonate cotransporter 4 (1116 aa).

The span at 1 to 14 (MKVDEEKAGVKKLD) shows a compositional bias: basic and acidic residues. 3 disordered regions span residues 1–92 (MKVD…TRSP), 222–257 (PIHR…STED), and 431–467 (PGQM…SGDE). Topologically, residues 1–515 (MKVDEEKAGV…YDGFHLQSIS (515 aa)) are cytoplasmic. The segment covering 233–247 (SVSTTNRSSARSSSA) has biased composition (low complexity). Gly residues predominate over residues 437–464 (SVGGGGASAGGGGSGGGAGGSGAGGVGS). Residues 516–536 (AVLFIYLGCITNAITFGGLLG) form a helical membrane-spanning segment. Over 537–558 (DATDNYQGVMESFLGTAMAGSL) the chain is Extracellular. A helical membrane pass occupies residues 559–579 (FCLFSGQPLIILSSTGPILIF). Residues 580-600 (EKLLFDFSKANGLDYMEFRLW) lie on the Cytoplasmic side of the membrane. The chain crosses the membrane as a helical span at residues 601-621 (IGLHSAIQCLILVATDASFII). Residues 622–631 (KYITRFTEEG) are Extracellular-facing. The helical transmembrane segment at 632–652 (FSTLISFIFIYDAIKKMIGAF) threads the bilayer. At 653–730 (KYYPINTDFK…GGRLLGSSCQ (78 aa)) the chain is on the cytoplasmic side. Residues 731-751 (FVPDLALMSFILFFGTYSMTL) form a helical membrane-spanning segment. Over 752–768 (TLKKFKFSRYFPTKVRT) the chain is Extracellular. The helical transmembrane segment at 769–789 (LVADFSIVFSILLFCGIDACF) threads the bilayer. Residues 790–819 (GLQTPKLHVPSVIKPTRPDRGWFVAPFGKN) lie on the Cytoplasmic side of the membrane. The chain crosses the membrane as a helical span at residues 820–840 (PWWVYPASILPALLVTILIFM). The Extracellular portion of the chain corresponds to 841–865 (DQQITAVIVNRKENKLRKAAGYHLD). A helical transmembrane segment spans residues 866 to 886 (LFWVGILMALCSFTGLPWYVA). Residues 887 to 922 (ATVISIAHIDSLKMETETSAPGEQPQFLGVREQRVT) lie on the Cytoplasmic side of the membrane. A helical transmembrane segment spans residues 923–943 (GVMVFILTGISVFLAPILKYI). Topologically, residues 944 to 945 (PM) are extracellular. Residues 946–966 (PVLYGVFLYMGVASLNGIQFW) form a helical membrane-spanning segment. Residues 967 to 987 (ERCKLFLMPAKHQPDHAFLRH) are Cytoplasmic-facing. 2 helical membrane-spanning segments follow: residues 988 to 1008 (VPLR…ALLW) and 1009 to 1029 (ILKS…LIIV). Residues 1030–1116 (RRLLDLIFSQ…KRSSSWSYSL (87 aa)) lie on the Cytoplasmic side of the membrane.

The protein belongs to the anion exchanger (TC 2.A.31) family.

It is found in the apical cell membrane. It localises to the basolateral cell membrane. It catalyses the reaction 2 hydrogencarbonate(out) + Na(+)(out) = 2 hydrogencarbonate(in) + Na(+)(in). It carries out the reaction 3 hydrogencarbonate(out) + Na(+)(out) = 3 hydrogencarbonate(in) + Na(+)(in). Mediates sodium- and bicarbonate-dependent electrogenic sodium bicarbonate cotransport, with a Na(+):HCO3(-) stoichiometry varying from 1:2 to 1:3. The polypeptide is Electrogenic sodium bicarbonate cotransporter 4 (Slc4a5) (Mus musculus (Mouse)).